The chain runs to 546 residues: ATP synthase subunit alpha (546 aa).

172–179 (GDRKTGKT) is an ATP binding site. 2 stretches are compositionally biased toward polar residues: residues 511–520 (FRTTEGNNLG) and 536–546 (TELNVSRKTAK). Residues 511-546 (FRTTEGNNLGTEAPVDPLAADDVNKTELNVSRKTAK) are disordered.

Belongs to the ATPase alpha/beta chains family. In terms of assembly, F-type ATPases have 2 components, CF(1) - the catalytic core - and CF(0) - the membrane proton channel. CF(1) has five subunits: alpha(3), beta(3), gamma(1), delta(1), epsilon(1). CF(0) has three main subunits: a(1), b(2) and c(9-12). The alpha and beta chains form an alternating ring which encloses part of the gamma chain. CF(1) is attached to CF(0) by a central stalk formed by the gamma and epsilon chains, while a peripheral stalk is formed by the delta and b chains.

It is found in the cell membrane. The catalysed reaction is ATP + H2O + 4 H(+)(in) = ADP + phosphate + 5 H(+)(out). In terms of biological role, produces ATP from ADP in the presence of a proton gradient across the membrane. The alpha chain is a regulatory subunit. The protein is ATP synthase subunit alpha of Corynebacterium aurimucosum (strain ATCC 700975 / DSM 44827 / CIP 107346 / CN-1) (Corynebacterium nigricans).